The following is a 1145-amino-acid chain: Cellulose synthase-like protein D3 (1145 aa).

The span at 1–19 shows a compositional bias: polar residues; it reads MASNNHFMNSRSNLSTNSD. Disordered regions lie at residues 1 to 38 and 189 to 208; these read MASN…TFAR and DNNK…SKMD. 2 helical membrane passes run 289-309 and 319-339; these read VISP…LFLM and AIWL…SWLL. Asp-419 is a catalytic residue. Ser-755 is modified (phosphoserine). The active site involves Asp-848. A run of 6 helical transmembrane segments spans residues 930–950, 956–976, 1002–1022, 1045–1065, 1079–1099, and 1109–1129; these read FFLI…QFIV, TFLV…LLEI, LAAV…SFTL, SLMI…AVGF, LIGG…FAKG, and TIVY…WVAI.

This sequence belongs to the glycosyltransferase 2 family. Plant cellulose synthase-like D subfamily. Preferentially expressed in root hair cells. Expressed in roots, leaves, stems, flowers and siliques.

It is found in the golgi apparatus membrane. In terms of biological role, thought to be a Golgi-localized beta-glycan synthase that polymerize the backbones of noncellulosic polysaccharides (hemicelluloses) of plant cell wall. Required for synthesis of a cell wall polysaccharide essential for root hair elongation, but not initiation. May be the functional ortholog of rice CSLD1. The protein is Cellulose synthase-like protein D3 (CSLD3) of Arabidopsis thaliana (Mouse-ear cress).